We begin with the raw amino-acid sequence, 737 residues long: Phosphoribosylformylglycinamidine synthase subunit PurL (737 aa).

Residue His50 is part of the active site. ATP-binding residues include Tyr53 and Lys92. A Mg(2+)-binding site is contributed by Glu94. Residues 95-98 (SHNH) and Arg117 each bind substrate. His96 acts as the Proton acceptor in catalysis. Asp118 serves as a coordination point for Mg(2+). Gln241 lines the substrate pocket. Asp269 lines the Mg(2+) pocket. 313-315 (ESQ) lines the substrate pocket. ATP contacts are provided by Asp494 and Gly531. Asn532 contributes to the Mg(2+) binding site. Residue Ser534 participates in substrate binding.

This sequence belongs to the FGAMS family. In terms of assembly, monomer. Part of the FGAM synthase complex composed of 1 PurL, 1 PurQ and 2 PurS subunits.

The protein localises to the cytoplasm. It carries out the reaction N(2)-formyl-N(1)-(5-phospho-beta-D-ribosyl)glycinamide + L-glutamine + ATP + H2O = 2-formamido-N(1)-(5-O-phospho-beta-D-ribosyl)acetamidine + L-glutamate + ADP + phosphate + H(+). It functions in the pathway purine metabolism; IMP biosynthesis via de novo pathway; 5-amino-1-(5-phospho-D-ribosyl)imidazole from N(2)-formyl-N(1)-(5-phospho-D-ribosyl)glycinamide: step 1/2. Part of the phosphoribosylformylglycinamidine synthase complex involved in the purines biosynthetic pathway. Catalyzes the ATP-dependent conversion of formylglycinamide ribonucleotide (FGAR) and glutamine to yield formylglycinamidine ribonucleotide (FGAM) and glutamate. The FGAM synthase complex is composed of three subunits. PurQ produces an ammonia molecule by converting glutamine to glutamate. PurL transfers the ammonia molecule to FGAR to form FGAM in an ATP-dependent manner. PurS interacts with PurQ and PurL and is thought to assist in the transfer of the ammonia molecule from PurQ to PurL. The sequence is that of Phosphoribosylformylglycinamidine synthase subunit PurL from Rhodopseudomonas palustris (strain BisA53).